A 300-amino-acid chain; its full sequence is Vetispiradiene synthase 2 (300 aa).

5 residues coordinate Mg(2+): aspartate 54, aspartate 58, aspartate 197, threonine 201, and glutamate 205. The DDXXD motif motif lies at 54–58 (DDTFD).

This sequence belongs to the terpene synthase family. Tpsa subfamily. The cofactor is Mg(2+).

Its subcellular location is the cytoplasm. The catalysed reaction is (2E,6E)-farnesyl diphosphate = (-)-vetispiradiene + diphosphate. The protein operates within secondary metabolite biosynthesis; terpenoid biosynthesis. In terms of biological role, sesquiterpene synthase that catalyzes the formation of vetispiradiene from trans,trans-farnesyl diphosphate. The initial internal cyclization produces the monocyclic intermediate germacrene A. The chain is Vetispiradiene synthase 2 from Hyoscyamus muticus (Egyptian henbane).